Reading from the N-terminus, the 590-residue chain is UvrABC system protein C (590 aa).

In terms of domain architecture, GIY-YIG spans 14–91; the sequence is DQPGCYLMKD…IKKYDPKYNV (78 aa). A UVR domain is found at 196–231; that stretch reads QQIKKELTEKMQEAAEQLEFERAKELRDQIAYIDST.

The protein belongs to the UvrC family. As to quaternary structure, interacts with UvrB in an incision complex.

It localises to the cytoplasm. In terms of biological role, the UvrABC repair system catalyzes the recognition and processing of DNA lesions. UvrC both incises the 5' and 3' sides of the lesion. The N-terminal half is responsible for the 3' incision and the C-terminal half is responsible for the 5' incision. This is UvrABC system protein C from Bacillus pumilus (strain SAFR-032).